The following is a 159-amino-acid chain: Cytochrome c-type biogenesis protein CcmE (159 aa).

Over 1–8 the chain is Cytoplasmic; the sequence is MNLRRKNR. A helical; Signal-anchor for type II membrane protein membrane pass occupies residues 9–29; that stretch reads LWVVCAVLAGLGLTTALVLYA. The Periplasmic segment spans residues 30-159; sequence LRANIDLFYT…PQRADKDTSS (130 aa). Positions 129 to 159 are disordered; sequence KHDENYTPPEVEKAMQENHRRPQRADKDTSS. Heme contacts are provided by H130 and Y134.

It belongs to the CcmE/CycJ family.

It localises to the cell inner membrane. Functionally, heme chaperone required for the biogenesis of c-type cytochromes. Transiently binds heme delivered by CcmC and transfers the heme to apo-cytochromes in a process facilitated by CcmF and CcmH. The polypeptide is Cytochrome c-type biogenesis protein CcmE (Salmonella typhimurium (strain LT2 / SGSC1412 / ATCC 700720)).